The following is a 947-amino-acid chain: Nonribosomal peptide synthetase ucdA (947 aa).

The segment at 25-413 (YSPHANAGYC…AGPVVFKEYF (389 aa)) is adenylation (A) domain. Residues 585–665 (APENEFERDL…DLGTALRKLQ (81 aa)) enclose the Carrier domain. Ser623 bears the O-(pantetheine 4'-phosphoryl)serine mark. The interval 684-934 (PLWLVHPGVG…MLSPEHVFDF (251 aa)) is thioesterase (TE) domain.

The protein belongs to the NRP synthetase family.

It carries out the reaction 2 3-(4-hydroxyphenyl)pyruvate + 2 ATP = atromentin + 2 AMP + 2 diphosphate + H(+). It functions in the pathway secondary metabolite biosynthesis. In terms of biological role, nonribosomal peptide synthetase that mediates the biosynthesis of usterphenyllins and uscandidusins, p-terphenyl derivatives. Within the pathway, ucdA condenses two 4-hydroxyphenylpyruvate (HPPA) units to produce atromentin. UcdA first activates HPPA through its A domain to AMP-HPPA. The HPPA unit is then loaded to the T domain and eventually transferred to the TE domain. Another HPPA unit is then loaded onto the T domain. The TE domain then catalyzes the condensation of the two HPPA units and the release of atromentin via cyclization. The pathway begin with the biosynthesis of 4-hydroxyphenylpyruvate (HPPA) from L-tyrosine, possibly by the aminotransferase ucdG. The nonribosomal peptide synthetase ucdA then condenses two HPPA units to produce atromentin. The key step in this pathway is the reduction and dehydration of atromentin to form a terphenyl triol intermediate, performed by the NAD-dependent dehydrogenase ucdB. Further O-methylation by the methyltransferase ucdC forms terphenyllin carrying two methoxy moieties at C-9 and C-12, and subsequent dihydroxylation at C-3 of ring A and C-15 of ring C by the flavin-dependent oxygenase ucdD leads to 3,15-dihydroxyterphenyllin. Prenylation by ucdE at position C-5 of ring A forms usterphenyllin B, and is followed by a second prenylation at position C-14 of ring C to form usterphenyllin A. The following furan ring formation that leads to uscandidusins A and B was proven to be an unexpected spontaneous non-enzymatic reaction. The polypeptide is Nonribosomal peptide synthetase ucdA (Aspergillus ustus).